A 175-amino-acid polypeptide reads, in one-letter code: Crossover junction endodeoxyribonuclease RuvC (175 aa).

Active-site residues include D11, E71, and H143. Mg(2+) contacts are provided by D11, E71, and H143.

The protein belongs to the RuvC family. In terms of assembly, homodimer which binds Holliday junction (HJ) DNA. The HJ becomes 2-fold symmetrical on binding to RuvC with unstacked arms; it has a different conformation from HJ DNA in complex with RuvA. In the full resolvosome a probable DNA-RuvA(4)-RuvB(12)-RuvC(2) complex forms which resolves the HJ. It depends on Mg(2+) as a cofactor.

The protein resides in the cytoplasm. It catalyses the reaction Endonucleolytic cleavage at a junction such as a reciprocal single-stranded crossover between two homologous DNA duplexes (Holliday junction).. Functionally, the RuvA-RuvB-RuvC complex processes Holliday junction (HJ) DNA during genetic recombination and DNA repair. Endonuclease that resolves HJ intermediates. Cleaves cruciform DNA by making single-stranded nicks across the HJ at symmetrical positions within the homologous arms, yielding a 5'-phosphate and a 3'-hydroxyl group; requires a central core of homology in the junction. The consensus cleavage sequence is 5'-(A/T)TT(C/G)-3'. Cleavage occurs on the 3'-side of the TT dinucleotide at the point of strand exchange. HJ branch migration catalyzed by RuvA-RuvB allows RuvC to scan DNA until it finds its consensus sequence, where it cleaves and resolves the cruciform DNA. The sequence is that of Crossover junction endodeoxyribonuclease RuvC from Parvibaculum lavamentivorans (strain DS-1 / DSM 13023 / NCIMB 13966).